Here is a 253-residue protein sequence, read N- to C-terminus: Large ribosomal subunit protein uL1m (253 aa).

Residues 1 to 81 (MSSLIALGKR…SIALKSNRRA (81 aa)) constitute a mitochondrion transit peptide.

Belongs to the universal ribosomal protein uL1 family. In terms of assembly, component of the mitochondrial large ribosomal subunit (mt-LSU). Mature yeast 74S mitochondrial ribosomes consist of a small (37S) and a large (54S) subunit. The 37S small subunit contains a 15S ribosomal RNA (15S mt-rRNA) and at least 32 different proteins. The 54S large subunit contains a 21S rRNA (21S mt-rRNA) and at least 45 different proteins.

It is found in the mitochondrion. Component of the mitochondrial ribosome (mitoribosome), a dedicated translation machinery responsible for the synthesis of mitochondrial genome-encoded proteins, including at least some of the essential transmembrane subunits of the mitochondrial respiratory chain. The mitoribosomes are attached to the mitochondrial inner membrane and translation products are cotranslationally integrated into the membrane. In Schizosaccharomyces pombe (strain 972 / ATCC 24843) (Fission yeast), this protein is Large ribosomal subunit protein uL1m (mrpl1).